A 673-amino-acid chain; its full sequence is DNA ligase (673 aa).

NAD(+)-binding positions include 33–37 (DYEYD), 82–83 (SL), and Glu-113. Lys-115 serves as the catalytic N6-AMP-lysine intermediate. 4 residues coordinate NAD(+): Arg-136, Glu-170, Lys-285, and Lys-309. The Zn(2+) site is built by Cys-403, Cys-406, Cys-421, and Cys-426. Positions 583–672 (AKSDILKGYT…SHEEVEKILM (90 aa)) constitute a BRCT domain.

The protein belongs to the NAD-dependent DNA ligase family. LigA subfamily. Mg(2+) serves as cofactor. It depends on Mn(2+) as a cofactor.

The catalysed reaction is NAD(+) + (deoxyribonucleotide)n-3'-hydroxyl + 5'-phospho-(deoxyribonucleotide)m = (deoxyribonucleotide)n+m + AMP + beta-nicotinamide D-nucleotide.. Functionally, DNA ligase that catalyzes the formation of phosphodiester linkages between 5'-phosphoryl and 3'-hydroxyl groups in double-stranded DNA using NAD as a coenzyme and as the energy source for the reaction. It is essential for DNA replication and repair of damaged DNA. This Caldicellulosiruptor saccharolyticus (strain ATCC 43494 / DSM 8903 / Tp8T 6331) protein is DNA ligase.